An 80-amino-acid chain; its full sequence is Translation initiation factor IF-1, chloroplastic (80 aa).

Residues 1–72 (MKEHDLINME…TKGRILYRIR (72 aa)) form the S1-like domain.

It belongs to the IF-1 family. Component of the 30S ribosomal translation pre-initiation complex which assembles on the 30S ribosome in the order IF-2 and IF-3, IF-1 and N-formylmethionyl-tRNA(fMet); mRNA recruitment can occur at any time during PIC assembly.

The protein resides in the plastid. It localises to the chloroplast. One of the essential components for the initiation of protein synthesis. Stabilizes the binding of IF-2 and IF-3 on the 30S subunit to which N-formylmethionyl-tRNA(fMet) subsequently binds. Helps modulate mRNA selection, yielding the 30S pre-initiation complex (PIC). Upon addition of the 50S ribosomal subunit IF-1, IF-2 and IF-3 are released leaving the mature 70S translation initiation complex. This is Translation initiation factor IF-1, chloroplastic from Psilotum nudum (Whisk fern).